Here is a 160-residue protein sequence, read N- to C-terminus: Probable small nuclear ribonucleoprotein-associated protein B (160 aa).

Residues 4–86 (SKNNKMMAHL…IVSMTVDGPP (83 aa)) form the Sm domain. Positions 80–160 (MTVDGPPPRD…YGGPPGGRPF (81 aa)) are disordered. Gly residues-rich tracts occupy residues 99–113 (GGAG…GGRG), 128–143 (APGG…GGPG), and 150–160 (GYGGPPGGRPF).

Belongs to the snRNP SmB/SmN family.

The protein localises to the nucleus. It localises to the cytoplasm. It is found in the cytosol. In terms of biological role, plays a role in pre-mRNA splicing as a core component of the spliceosomal U1, U2, U4 and U5 small nuclear ribonucleoproteins (snRNPs), the building blocks of the spliceosome. In Caenorhabditis elegans, this protein is Probable small nuclear ribonucleoprotein-associated protein B (snr-2).